Consider the following 241-residue polypeptide: Co-chaperone protein p23-1 (241 aa).

Residues 2–91 (SRHPEVKWAE…AEPERWNKLL (90 aa)) form the CS domain. MGG repeat units lie at residues 129 to 131 (MGG), 132 to 134 (MGG), 135 to 137 (MGG), 138 to 140 (MGG), 141 to 143 (MGG), 144 to 146 (MGG), 147 to 149 (MGG), 150 to 152 (MGG), 162 to 164 (MGG), 165 to 167 (MGG), 168 to 170 (MGG), 171 to 173 (MGG), 180 to 182 (MGG), 183 to 185 (MGG), 186 to 188 (MGG), 189 to 191 (MGG), and 192 to 194 (MGG). Residues 129–194 (MGGMGGMGGM…GMGGMGGMGG (66 aa)) form a 17 X 3 AA repeats of M-G-G region. The interval 188-241 (GMGGMGGMEEFEDSDDEEETAKSGDKKDDAVKEEGLATEKAPAAEETTSVKEDK) is disordered. A compositionally biased stretch (acidic residues) spans 196 to 206 (EEFEDSDDEEE). Positions 207 to 224 (TAKSGDKKDDAVKEEGLA) are enriched in basic and acidic residues. Residues 225–234 (TEKAPAAEET) are compositionally biased toward low complexity.

This sequence belongs to the p23/wos2 family. As to quaternary structure, interacts with HSP90 in an ATP-dependent manner. Interacts with HSP90-5, HSP90-6 and HSP90-7. As to expression, widely expressed but preferentially in the root meristem.

Its subcellular location is the cytoplasm. It is found in the nucleus. Its function is as follows. Acts as a co-chaperone for HSP90. Controls root development through the modulation of auxin distribution in the root meristem. The polypeptide is Co-chaperone protein p23-1 (Arabidopsis thaliana (Mouse-ear cress)).